The chain runs to 309 residues: 4-hydroxy-3-methylbut-2-enyl diphosphate reductase (309 aa).

Cysteine 13 is a [4Fe-4S] cluster binding site. (2E)-4-hydroxy-3-methylbut-2-enyl diphosphate-binding residues include histidine 42 and histidine 75. Residues histidine 42 and histidine 75 each contribute to the dimethylallyl diphosphate site. Residues histidine 42 and histidine 75 each contribute to the isopentenyl diphosphate site. Residue cysteine 97 participates in [4Fe-4S] cluster binding. Residue histidine 125 coordinates (2E)-4-hydroxy-3-methylbut-2-enyl diphosphate. Histidine 125 lines the dimethylallyl diphosphate pocket. Histidine 125 provides a ligand contact to isopentenyl diphosphate. Residue glutamate 127 is the Proton donor of the active site. Residue threonine 165 participates in (2E)-4-hydroxy-3-methylbut-2-enyl diphosphate binding. Cysteine 195 contributes to the [4Fe-4S] cluster binding site. (2E)-4-hydroxy-3-methylbut-2-enyl diphosphate-binding residues include serine 223, serine 224, asparagine 225, and serine 267. Dimethylallyl diphosphate contacts are provided by serine 223, serine 224, asparagine 225, and serine 267. 4 residues coordinate isopentenyl diphosphate: serine 223, serine 224, asparagine 225, and serine 267.

Belongs to the IspH family. It depends on [4Fe-4S] cluster as a cofactor.

The enzyme catalyses isopentenyl diphosphate + 2 oxidized [2Fe-2S]-[ferredoxin] + H2O = (2E)-4-hydroxy-3-methylbut-2-enyl diphosphate + 2 reduced [2Fe-2S]-[ferredoxin] + 2 H(+). It catalyses the reaction dimethylallyl diphosphate + 2 oxidized [2Fe-2S]-[ferredoxin] + H2O = (2E)-4-hydroxy-3-methylbut-2-enyl diphosphate + 2 reduced [2Fe-2S]-[ferredoxin] + 2 H(+). It participates in isoprenoid biosynthesis; dimethylallyl diphosphate biosynthesis; dimethylallyl diphosphate from (2E)-4-hydroxy-3-methylbutenyl diphosphate: step 1/1. The protein operates within isoprenoid biosynthesis; isopentenyl diphosphate biosynthesis via DXP pathway; isopentenyl diphosphate from 1-deoxy-D-xylulose 5-phosphate: step 6/6. Catalyzes the conversion of 1-hydroxy-2-methyl-2-(E)-butenyl 4-diphosphate (HMBPP) into a mixture of isopentenyl diphosphate (IPP) and dimethylallyl diphosphate (DMAPP). Acts in the terminal step of the DOXP/MEP pathway for isoprenoid precursor biosynthesis. The protein is 4-hydroxy-3-methylbut-2-enyl diphosphate reductase of Chlamydia felis (strain Fe/C-56) (Chlamydophila felis).